A 130-amino-acid chain; its full sequence is MKLKGKGVGKNIVEGEVIVSKKPLSFLGGVDPETGIIIDPDSDIKGESIEGKILVFPKGRGSTVGSYVIYALSRNGKAPKAIIVEEAEPIVTVGAIISGIPLIAGVDISKLRTGMKVRINPRTGEVEIIG.

Catalysis depends on S62, which acts as the Proton acceptor.

This sequence belongs to the AcnX type II small subunit family. As to quaternary structure, heterodimer composed of a large subunit (PMDh-L) and a small subunit (PMDh-S).

The catalysed reaction is (R)-5-phosphomevalonate = (2E)-3-methyl-5-phosphooxypent-2-enoate + H2O. Its pathway is isoprenoid biosynthesis; isopentenyl diphosphate biosynthesis via mevalonate pathway. Functionally, component of a hydro-lyase that catalyzes the dehydration of mevalonate 5-phosphate (MVA5P) to form trans-anhydromevalonate 5-phosphate (tAHMP). Involved in the archaeal mevalonate (MVA) pathway, which provides fundamental precursors for isoprenoid biosynthesis, such as isopentenyl diphosphate (IPP) and dimethylallyl diphosphate (DMAPP). The chain is Phosphomevalonate dehydratase small subunit from Pyrococcus abyssi (strain GE5 / Orsay).